The primary structure comprises 590 residues: Phosphatidylserine decarboxylase proenzyme 1, mitochondrial (590 aa).

Residues 1–59 constitute a mitochondrion transit peptide; sequence MPLKPISFRWSKTSVRSVPNPFMYGPDNLNKPLSRASQMAERVHQQTPSSTNYQQRRYF. Residues 60–140 are Mitochondrial matrix-facing; that stretch reads SYYYYQFPKI…GKERRRFIRW (81 aa). Residues 141–159 form a helical membrane-spanning segment; that stretch reads WTVTSLTIVLGGVYAKIKY. The Mitochondrial intermembrane segment spans residues 160–590; the sequence is ERGDHEENPY…KVGQSLGGFV (431 aa). Active-site charge relay system; for autoendoproteolytic cleavage activity residues include D260, H403, and S558. Residue S558 is the Schiff-base intermediate with substrate; via pyruvic acid; for decarboxylase activity of the active site. S558 carries the post-translational modification Pyruvic acid (Ser); by autocatalysis.

The protein belongs to the phosphatidylserine decarboxylase family. PSD-B subfamily. Eukaryotic type I sub-subfamily. Heterodimer of a large membrane-associated beta subunit and a small pyruvoyl-containing alpha subunit. Requires pyruvate as cofactor. Is synthesized initially as an inactive proenzyme. Formation of the active enzyme involves a self-maturation process in which the active site pyruvoyl group is generated from an internal serine residue via an autocatalytic post-translational modification. Two non-identical subunits are generated from the proenzyme in this reaction, and the pyruvate is formed at the N-terminus of the alpha chain, which is derived from the carboxyl end of the proenzyme. The autoendoproteolytic cleavage occurs by a canonical serine protease mechanism, in which the side chain hydroxyl group of the serine supplies its oxygen atom to form the C-terminus of the beta chain, while the remainder of the serine residue undergoes an oxidative deamination to produce ammonia and the pyruvoyl prosthetic group on the alpha chain. During this reaction, the Ser that is part of the protease active site of the proenzyme becomes the pyruvoyl prosthetic group, which constitutes an essential element of the active site of the mature decarboxylase.

It localises to the mitochondrion inner membrane. It catalyses the reaction a 1,2-diacyl-sn-glycero-3-phospho-L-serine + H(+) = a 1,2-diacyl-sn-glycero-3-phosphoethanolamine + CO2. It participates in phospholipid metabolism; phosphatidylethanolamine biosynthesis; phosphatidylethanolamine from CDP-diacylglycerol: step 2/2. In terms of biological role, catalyzes the formation of phosphatidylethanolamine (PtdEtn) from phosphatidylserine (PtdSer). Plays a central role in phospholipid metabolism and in the interorganelle trafficking of phosphatidylserine. Important for virulence. The protein is Phosphatidylserine decarboxylase proenzyme 1, mitochondrial of Candida albicans (strain SC5314 / ATCC MYA-2876) (Yeast).